Consider the following 529-residue polypeptide: Neuronal acetylcholine receptor subunit alpha-2 (529 aa).

The N-terminal stretch at 1–26 (MGPSCPVFLSFTKLSLWWLLLTPAGG) is a signal peptide. Positions 27–56 (EEAKRPPPRAPGDPLSSPSPTALPQGGSHT) are disordered. Residues 27–264 (EEAKRPPPRA…VTYAFVIRRL (238 aa)) are Extracellular-facing. 2 N-linked (GlcNAc...) asparagine glycosylation sites follow: N79 and N129. A disulfide bridge links C183 with C197. N235 carries N-linked (GlcNAc...) asparagine glycosylation. The cysteines at positions 247 and 248 are disulfide-linked. Transmembrane regions (helical) follow at residues 265-289 (PLFY…VFYL), 297-315 (ITLC…LLIT), and 331-352 (YLLF…VLNV). The Cytoplasmic segment spans residues 353 to 502 (HHRSPSTHTM…WKYVAMVIDR (150 aa)). Residues 503-521 (IFLWLFIIVCFLGTIGLFL) traverse the membrane as a helical segment.

This sequence belongs to the ligand-gated ion channel (TC 1.A.9) family. Acetylcholine receptor (TC 1.A.9.1) subfamily. Alpha-2/CHRNA2 sub-subfamily. In terms of assembly, neuronal AChR is composed of two different types of subunits: alpha and non-alpha (beta). CHRNA2/alpha-2 subunit can be combined to CHRNB2/beta-2 or CHRNB4/beta-4 to give rise to functional receptors. Both CHRNA2:CHRNB2 and CHRNA2:CHRNB4 nAChR complexes are heteropentamers with two subtypes: LS (low agonist sensitivity) with a (CHRNA2)3:(CHRNB2/4)2 and HS (high agonist sensitivity) with a (CHRNA2)2:(CHRNB2/4)3 stoichiometries; the subtypes differ in their subunit binding interfaces which are involved in ligand binding.

The protein localises to the synaptic cell membrane. Its subcellular location is the cell membrane. The enzyme catalyses Ca(2+)(in) = Ca(2+)(out). It carries out the reaction K(+)(in) = K(+)(out). The catalysed reaction is Na(+)(in) = Na(+)(out). Component of neuronal acetylcholine receptors (nAChRs) that function as pentameric, ligand-gated cation channels with high calcium permeability among other activities. nAChRs are excitatory neurotrasnmitter receptors formed by a collection of nAChR subunits known to mediate synaptic transmission in the nervous system and the neuromuscular junction. Each nAchR subunit confers differential attributes to channel properties, including activation, deactivation and desensitization kinetics, pH sensitivity, cation permeability, and binding to allosteric modulators. CHRNA2 forms heteropentameric neuronal acetylcholine receptors with CHRNB2 and CHRNB4 and plays a role in nicotine dependence. The polypeptide is Neuronal acetylcholine receptor subunit alpha-2 (Homo sapiens (Human)).